Reading from the N-terminus, the 318-residue chain is Protoheme IX farnesyltransferase (318 aa).

9 consecutive transmembrane segments (helical) span residues 33-53 (VMSL…VSVH), 54-74 (PFIG…SGAL), 102-122 (GEAL…LALA), 125-145 (VLAG…YTMW), 154-174 (IVIG…AATG), 181-201 (WLMF…LALF), 225-245 (VHIL…AFSN), 246-266 (IGGP…LLGA), and 288-308 (FFKL…AEAL).

This sequence belongs to the UbiA prenyltransferase family. Protoheme IX farnesyltransferase subfamily. As to quaternary structure, interacts with CtaA.

It localises to the cell inner membrane. The enzyme catalyses heme b + (2E,6E)-farnesyl diphosphate + H2O = Fe(II)-heme o + diphosphate. The protein operates within porphyrin-containing compound metabolism; heme O biosynthesis; heme O from protoheme: step 1/1. Functionally, converts heme B (protoheme IX) to heme O by substitution of the vinyl group on carbon 2 of heme B porphyrin ring with a hydroxyethyl farnesyl side group. This is Protoheme IX farnesyltransferase from Ruegeria pomeroyi (strain ATCC 700808 / DSM 15171 / DSS-3) (Silicibacter pomeroyi).